A 101-amino-acid polypeptide reads, in one-letter code: Large ribosomal subunit protein bL28 (101 aa).

This sequence belongs to the bacterial ribosomal protein bL28 family.

The protein is Large ribosomal subunit protein bL28 of Rhodopseudomonas palustris (strain BisA53).